The sequence spans 688 residues: Probable glucan endo-1,3-beta-glucosidase btgC (688 aa).

Disordered stretches follow at residues 1-91 (MSGP…NLGP), 126-148 (ANIPAERGLSTTGSDNPYVPEPP), and 168-195 (GQLTPGQSVSHLSSTNPSQRNLYDIPYQ). At 1–307 (MSGPNRTYSF…PKPGGGNKKR (307 aa)) the chain is on the cytoplasmic side. The span at 175–188 (SVSHLSSTNPSQRN) shows a compositional bias: polar residues. A helical; Signal-anchor for type II membrane protein transmembrane segment spans residues 308-328 (GWIVGAILAFIIIGAIVGGAV). The Extracellular portion of the chain corresponds to 329-688 (GGTIGHRGNE…IPDCGGKTAT (360 aa)). The segment at 334–363 (HRGNEEPSSASSASSSSTQTATEDTSVNGD) is disordered. Positions 341 to 355 (SSASSASSSSTQTAT) are enriched in low complexity. N-linked (GlcNAc...) asparagine glycans are attached at residues N408, N431, and N459. E491 serves as the catalytic Proton donor. Residue E590 is the Nucleophile of the active site. N-linked (GlcNAc...) asparagine glycans are attached at residues N609 and N635.

It belongs to the glycosyl hydrolase 17 family.

Its subcellular location is the cell membrane. It carries out the reaction Hydrolysis of (1-&gt;3)-beta-D-glucosidic linkages in (1-&gt;3)-beta-D-glucans.. In terms of biological role, glucanases play a role in cell expansion during growth, in cell-cell fusion during mating, and in spore release during sporulation. This enzyme may be involved in beta-glucan degradation. Active on laminarin and lichenan. This is Probable glucan endo-1,3-beta-glucosidase btgC (btgC) from Aspergillus fumigatus (strain ATCC MYA-4609 / CBS 101355 / FGSC A1100 / Af293) (Neosartorya fumigata).